A 314-amino-acid chain; its full sequence is tRNA dimethylallyltransferase (314 aa).

Residue 6 to 13 (GPTAVGKT) participates in ATP binding. 8–13 (TAVGKT) contacts substrate. The tract at residues 31-34 (DSRQ) is interaction with substrate tRNA.

It belongs to the IPP transferase family. Monomer. Mg(2+) is required as a cofactor.

The enzyme catalyses adenosine(37) in tRNA + dimethylallyl diphosphate = N(6)-dimethylallyladenosine(37) in tRNA + diphosphate. In terms of biological role, catalyzes the transfer of a dimethylallyl group onto the adenine at position 37 in tRNAs that read codons beginning with uridine, leading to the formation of N6-(dimethylallyl)adenosine (i(6)A). The chain is tRNA dimethylallyltransferase from Pseudothermotoga lettingae (strain ATCC BAA-301 / DSM 14385 / NBRC 107922 / TMO) (Thermotoga lettingae).